The following is a 256-amino-acid chain: Tyrosine-protein kinase-interacting protein (256 aa).

Positions 1–14 (MANEGEEIELTEFP) are enriched in acidic residues. Residues 1–49 (MANEGEEIELTEFPETEKERKDEEKLSSCSEETTNTSSSSGSDHVPVPI) form a disordered region. Over 1–228 (MANEGEEIEL…DLKRLENKIN (228 aa)) the chain is Cytoplasmic. Residues 15–26 (ETEKERKDEEKL) show a composition bias toward basic and acidic residues. Residues 27–42 (SSCSEETTNTSSSSGS) show a composition bias toward low complexity. Y114 is subject to Phosphotyrosine; by host LCK. Phosphotyrosine; by host is present on Y127. The CSKH/LBD2 stretch occupies residues 146-155 (EDLQSFLEKY). A disordered region spans residues 162–183 (PKRDLSATWDPGMPTPPLPPRP). Residues 174–183 (MPTPPLPPRP) are SH3B/LBD1. Residues 174–183 (MPTPPLPPRP) are compositionally biased toward pro residues. A helical membrane pass occupies residues 229–249 (VIICLVVVILAVLLLVTVLSI). At 250-256 (LHIGMKS) the chain is on the extracellular side.

Binds host LCK, human WDR48 and human NXF1/TAP. Forms a complex with activated LCK and STAT1 and STAT3. Post-translationally, phosphorylation on Tyr-114 acts as a docking site for the recruitment of STATs 1 and 3.

Its subcellular location is the host cell membrane. Plays a critical role in virus induced T-cell transformation. Binds to T-cell-specific tyrosine kinase LCK SH2 and SH3 domains, thereby activating its kinase activity. Once phosphorylated by host LCK, forms a complex with at least STAT 1 and 3, resulting on the phosphorylation of STAT3 and presumably STAT1, and their migration into the nucleus to induce transcription of target genes. Stimulates host ILF3/NF-AT-90 activity. Association with host NXF1/TAP transduces the signal up-regulating surface expression of adhesion molecules as well as activating NF-kappa-B activity. Acts synergistically with StpC to stimulate NF-kappa-B activity and interleukin-2 gene expression. Activation of NF-kappa-B protects lymphocytes from apoptosis, thereby facilitating viral induced cell transformation. May cause down-regulation of host LCK and cell apoptosis when stably overexpressed ex vivo. Interaction with WDR48 induce degradation of T-cell receptor in a lysosome-dependent fashion, when both proteins are overexpressed. The biological effect of this interaction remains controversial since no T-cell receptor degradation is observed in infected cells. The chain is Tyrosine-protein kinase-interacting protein from Saimiri sciureus (Common squirrel monkey).